We begin with the raw amino-acid sequence, 472 residues long: Pyruvate kinase (472 aa).

Position 33 (R33) interacts with substrate. K(+)-binding residues include N35, S37, and D67. 35 to 38 (NFSH) is a binding site for ATP. The ATP site is built by R74 and K155. Position 220 (E220) interacts with Mg(2+). Residues G243, D244, and T276 each contribute to the substrate site. Mg(2+) is bound at residue D244.

It belongs to the pyruvate kinase family. Homotetramer. Mg(2+) serves as cofactor. Requires K(+) as cofactor.

It catalyses the reaction pyruvate + ATP = phosphoenolpyruvate + ADP + H(+). It functions in the pathway carbohydrate degradation; glycolysis; pyruvate from D-glyceraldehyde 3-phosphate: step 5/5. The chain is Pyruvate kinase (pyk) from Mycobacterium tuberculosis (strain CDC 1551 / Oshkosh).